Here is a 246-residue protein sequence, read N- to C-terminus: rRNA methyltransferase 2, mitochondrial (246 aa).

The transit peptide at 1–18 (MAGYLKLVCVSFQRQGFH) directs the protein to the mitochondrion. S-adenosyl-L-methionine-binding positions include 83 to 86 (PGAW), aspartate 112, 129 to 130 (DV), and aspartate 154. Lysine 194 (proton acceptor) is an active-site residue.

It belongs to the class I-like SAM-binding methyltransferase superfamily. RNA methyltransferase RlmE family. As to expression, widely expressed, with highest expression in muscle, placenta, and heart.

The protein resides in the mitochondrion. It carries out the reaction uridine(1369) in 16S rRNA + S-adenosyl-L-methionine = 2'-O-methyluridine(1369) in 16S rRNA + S-adenosyl-L-homocysteine + H(+). Functionally, S-adenosyl-L-methionine-dependent 2'-O-ribose methyltransferase that catalyzes the formation of 2'-O-methyluridine at position 1369 (Um1369) in the 16S mitochondrial large subunit ribosomal RNA (mtLSU rRNA), a universally conserved modification in the peptidyl transferase domain of the mtLSU rRNA. This activity may require prior 2'-O-methylguanosine modification at position 1370 (Gm1370) by MRM3. Essential for late-stage assembly of mtLSU required for efficient translation of mitochondrial DNA encoded proteins; methyltransferase activity is not required for this function. Essential for mitochondrial respiratory function. The sequence is that of rRNA methyltransferase 2, mitochondrial from Homo sapiens (Human).